The chain runs to 107 residues: Protein Rev (107 aa).

S5 carries the post-translational modification Phosphoserine; by host CK2. Residues 18–26 (AIKILYQSN) form a homomultimerization region. Disordered regions lie at residues 24–48 (QSNP…WRAR) and 82–107 (HLDC…VGRS). The Nuclear localization signal and RNA-binding (RRE) signature appears at 34–50 (TRQARRNRRRRWRARQR). Basic residues predominate over residues 36-48 (QARRNRRRRWRAR). The Nuclear export signal and binding to XPO1 signature appears at 73–84 (LQLPPLERLHLD). Over residues 88–101 (DSGTSGTQQPQGTE) the composition is skewed to polar residues. S92 bears the Phosphoserine; by host mark.

It belongs to the HIV-1 REV protein family. Homomultimer; when bound to the RRE. Multimeric assembly is essential for activity and may involve XPO1. Binds to human KPNB1, XPO1, TNPO1, RANBP5 and IPO7. Interacts with the viral Integrase. Interacts with human KHDRBS1. Interacts with human NAP1; this interaction decreases Rev multimerization and stimulates its activity. Interacts with human DEAD-box helicases DDX3 and DDX24; these interactions may serve for viral RNA export to the cytoplasm and packaging, respectively. Interacts with human PSIP1; this interaction may inhibit HIV-1 DNA integration by promoting dissociation of the Integrase-LEDGF/p75 complex. Post-translationally, asymmetrically arginine dimethylated at one site by host PRMT6. Methylation impairs the RNA-binding activity and export of viral RNA from the nucleus to the cytoplasm. Phosphorylated by protein kinase CK2. Presence of, and maybe binding to the N-terminus of the regulatory beta subunit of CK2 is necessary for CK2-mediated Rev's phosphorylation.

The protein resides in the host nucleus. The protein localises to the host nucleolus. It is found in the host cytoplasm. In terms of biological role, escorts unspliced or incompletely spliced viral pre-mRNAs (late transcripts) out of the nucleus of infected cells. These pre-mRNAs carry a recognition sequence called Rev responsive element (RRE) located in the env gene, that is not present in fully spliced viral mRNAs (early transcripts). This function is essential since most viral proteins are translated from unspliced or partially spliced pre-mRNAs which cannot exit the nucleus by the pathway used by fully processed cellular mRNAs. Rev itself is translated from a fully spliced mRNA that readily exits the nucleus. Rev's nuclear localization signal (NLS) binds directly to KPNB1/Importin beta-1 without previous binding to KPNA1/Importin alpha-1. KPNB1 binds to the GDP bound form of RAN (Ran-GDP) and targets Rev to the nucleus. In the nucleus, the conversion from Ran-GDP to Ran-GTP dissociates Rev from KPNB1 and allows Rev's binding to the RRE in viral pre-mRNAs. Rev multimerization on the RRE via cooperative assembly exposes its nuclear export signal (NES) to the surface. Rev can then form a complex with XPO1/CRM1 and Ran-GTP, leading to nuclear export of the complex. Conversion from Ran-GTP to Ran-GDP mediates dissociation of the Rev/RRE/XPO1/RAN complex, so that Rev can return to the nucleus for a subsequent round of export. Beside KPNB1, also seems to interact with TNPO1/Transportin-1, RANBP5/IPO5 and IPO7/RANBP7 for nuclear import. The nucleoporin-like HRB/RIP is an essential cofactor that probably indirectly interacts with Rev to release HIV RNAs from the perinuclear region to the cytoplasm. The protein is Protein Rev of Human immunodeficiency virus type 1 group M subtype G (isolate SE6165) (HIV-1).